We begin with the raw amino-acid sequence, 163 residues long: Large ribosomal subunit protein uL10 (163 aa).

The protein belongs to the universal ribosomal protein uL10 family. As to quaternary structure, part of the ribosomal stalk of the 50S ribosomal subunit. The N-terminus interacts with L11 and the large rRNA to form the base of the stalk. The C-terminus forms an elongated spine to which L12 dimers bind in a sequential fashion forming a multimeric L10(L12)X complex.

Its function is as follows. Forms part of the ribosomal stalk, playing a central role in the interaction of the ribosome with GTP-bound translation factors. This chain is Large ribosomal subunit protein uL10, found in Haemophilus influenzae (strain PittEE).